The chain runs to 325 residues: ATP phosphoribosyltransferase (325 aa).

It belongs to the ATP phosphoribosyltransferase family. Long subfamily. Mg(2+) serves as cofactor.

It localises to the cytoplasm. The catalysed reaction is 1-(5-phospho-beta-D-ribosyl)-ATP + diphosphate = 5-phospho-alpha-D-ribose 1-diphosphate + ATP. The protein operates within amino-acid biosynthesis; L-histidine biosynthesis; L-histidine from 5-phospho-alpha-D-ribose 1-diphosphate: step 1/9. Its activity is regulated as follows. Feedback inhibited by histidine. In terms of biological role, catalyzes the condensation of ATP and 5-phosphoribose 1-diphosphate to form N'-(5'-phosphoribosyl)-ATP (PR-ATP). Has a crucial role in the pathway because the rate of histidine biosynthesis seems to be controlled primarily by regulation of HisG enzymatic activity. The protein is ATP phosphoribosyltransferase of Rhodopseudomonas palustris (strain BisB18).